We begin with the raw amino-acid sequence, 311 residues long: DNA replication terminus site-binding protein (311 aa).

Belongs to the Tus family.

It localises to the cytoplasm. Functionally, trans-acting protein required for termination of DNA replication. Binds to DNA replication terminator sequences (terA to terF) to prevent the passage of replication forks. The termination efficiency will be affected by the affinity of this protein for the terminator sequence. This is DNA replication terminus site-binding protein from Yersinia pseudotuberculosis serotype I (strain IP32953).